A 381-amino-acid polypeptide reads, in one-letter code: Homoserine O-succinyltransferase (381 aa).

Residues Asn-45–Asp-360 form the AB hydrolase-1 domain. The active-site Nucleophile is the Ser-151. Substrate is bound at residue Arg-221. Catalysis depends on residues Asp-321 and His-354. Asp-355 is a substrate binding site.

The protein belongs to the AB hydrolase superfamily. MetX family. As to quaternary structure, homodimer.

It is found in the cytoplasm. It carries out the reaction L-homoserine + succinyl-CoA = O-succinyl-L-homoserine + CoA. It functions in the pathway amino-acid biosynthesis; L-methionine biosynthesis via de novo pathway; O-succinyl-L-homoserine from L-homoserine: step 1/1. Transfers a succinyl group from succinyl-CoA to L-homoserine, forming succinyl-L-homoserine. In Burkholderia ambifaria (strain ATCC BAA-244 / DSM 16087 / CCUG 44356 / LMG 19182 / AMMD) (Burkholderia cepacia (strain AMMD)), this protein is Homoserine O-succinyltransferase.